The sequence spans 482 residues: Malvidin galactosylase UGT88C3 (482 aa).

The Proton acceptor role is filled by H16. D117 functions as the Charge relay in the catalytic mechanism. The UDP site is built by S279, W345, A349, H366, N370, S371, and E374.

This sequence belongs to the UDP-glycosyltransferase family. In terms of tissue distribution, highly expressed in leaves, sheaths, pistils and embryos, observed in stems, stem nodes and panicles, and present at low levels in roots.

Its subcellular location is the endoplasmic reticulum. It localises to the nucleus. The catalysed reaction is malvidin + UDP-alpha-D-galactose = malvidin 3-O-beta-D-galactoside + UDP + H(+). It functions in the pathway pigment biosynthesis; anthocyanin biosynthesis. Functionally, UDP-glycosyltransferase which uses UDP-galactose and malvidin as substrates to catalyze the biosynthesis of malvidin 3-O-galactoside, an anthocyanin conferring purple pigmentation. In Oryza sativa subsp. japonica (Rice), this protein is Malvidin galactosylase UGT88C3.